The following is an 89-amino-acid chain: Small ribosomal subunit protein uS17 (89 aa).

This sequence belongs to the universal ribosomal protein uS17 family. In terms of assembly, part of the 30S ribosomal subunit.

Functionally, one of the primary rRNA binding proteins, it binds specifically to the 5'-end of 16S ribosomal RNA. The chain is Small ribosomal subunit protein uS17 from Polynucleobacter asymbioticus (strain DSM 18221 / CIP 109841 / QLW-P1DMWA-1) (Polynucleobacter necessarius subsp. asymbioticus).